The primary structure comprises 251 residues: Pyrroloquinoline-quinone synthase (251 aa).

It belongs to the PqqC family.

It carries out the reaction 6-(2-amino-2-carboxyethyl)-7,8-dioxo-1,2,3,4,7,8-hexahydroquinoline-2,4-dicarboxylate + 3 O2 = pyrroloquinoline quinone + 2 H2O2 + 2 H2O + H(+). Its pathway is cofactor biosynthesis; pyrroloquinoline quinone biosynthesis. In terms of biological role, ring cyclization and eight-electron oxidation of 3a-(2-amino-2-carboxyethyl)-4,5-dioxo-4,5,6,7,8,9-hexahydroquinoline-7,9-dicarboxylic-acid to PQQ. The protein is Pyrroloquinoline-quinone synthase of Pseudomonas putida (strain GB-1).